Consider the following 327-residue polypeptide: NF-kappa-B inhibitor delta (327 aa).

The disordered stretch occupies residues 1–40 (MEDSLDTRLYPEPSLSQVGSWRVSSLPSGSPQLPSPTGPS). A compositionally biased stretch (polar residues) spans 14 to 23 (SLSQVGSWRV). ANK repeat units lie at residues 62 to 97 (EGDTLLHLFAARGLRWAAYAAAEVLQMYRQLDIREH), 98 to 127 (KGKTPLLVAAAANQPLIVEDLLSLGAEPNA), 131 to 160 (QGRSVLHVAATYGLPGVLSAVFKSGIQVDL), 166 to 215 (EGLT…SHTS), 220 to 250 (SNKTILHLAVQAANPTLVQLLLGLPRGDLRA), and 257 to 290 (HGNTALHMAAALPPGPPQEAIVRHLLAAGADPTL). Positions 293–327 (LENEQPVHLLRPGPGPEGLRQLLKRSRTAPPGLSS) are disordered.

This sequence belongs to the NF-kappa-B inhibitor family. Interacts with NFKB1, RELA and RELB; in the nucleus. In terms of tissue distribution, specifically expressed in spleen and at low levels in thymus. Expressed in a population of antigen-presenting dendritic cells which may act as regulators of systemic inflammatory response.

It localises to the nucleus. Regulates the expression of IL-2, IL-6, and other cytokines through regulation on NF-kappa-B activity. Functions in the regulation of inflammatory responses. Involved in the induction of T helper 17 cells (Th17) differentiation upon recognition of antigen by T cell antigen receptor (TCR). According to PubMed:11931770, it may also regulate TCR-induced negative selection of thymocytes. In Mus musculus (Mouse), this protein is NF-kappa-B inhibitor delta (Nfkbid).